The primary structure comprises 709 residues: ATP-binding cassette sub-family F member 3 (709 aa).

Ala-2 carries the N-acetylalanine modification. Ser-83 is subject to Phosphoserine. Over residues 129–143 (RLKAKQEKRSEKDTL) the composition is skewed to basic and acidic residues. The tract at residues 129–171 (RLKAKQEKRSEKDTLKTSNPLVLEEASASQAGSRKESRLESSG) is disordered. A phosphoserine mark is found at Ser-155, Ser-157, and Ser-161. A compositionally biased stretch (basic and acidic residues) spans 161–171 (SRKESRLESSG). ABC transporter domains lie at 178 to 424 (VRIE…LNQQ) and 492 to 707 (LQLD…RREG). 210–217 (GRNGLGKT) is an ATP binding site. Ser-283 is modified (phosphoserine). 525–532 (GENGAGKS) contacts ATP.

It belongs to the ABC transporter superfamily. ABCF family. EF3 subfamily.

In terms of biological role, displays an antiviral effect against flaviviruses in the presence of OAS1B. This is ATP-binding cassette sub-family F member 3 (ABCF3) from Pongo abelii (Sumatran orangutan).